Here is a 243-residue protein sequence, read N- to C-terminus: Small ribosomal subunit protein uS3 (243 aa).

The 69-residue stretch at 38–106 (IRKYLNARLA…DIQINIFEVK (69 aa)) folds into the KH type-2 domain. The disordered stretch occupies residues 214–243 (PNFTQSKESGRGNNGGNNGGKNFKRKKNNR).

Belongs to the universal ribosomal protein uS3 family. In terms of assembly, part of the 30S ribosomal subunit. Forms a tight complex with proteins S10 and S14.

Binds the lower part of the 30S subunit head. Binds mRNA in the 70S ribosome, positioning it for translation. The chain is Small ribosomal subunit protein uS3 from Bacteroides thetaiotaomicron (strain ATCC 29148 / DSM 2079 / JCM 5827 / CCUG 10774 / NCTC 10582 / VPI-5482 / E50).